The sequence spans 569 residues: Aspartate--tRNA ligase, cytoplasmic 2 (569 aa).

Positions 1–23 are disordered; it reads MSEENNHKEKSKNEIKKEKKKIE. An aspartate region spans residues 292–295; that stretch reads QFYR. Position 314 (Arg-314) interacts with L-aspartate. ATP contacts are provided by residues 314-316 and 322-324; these read RTD and RHL. 2 residues coordinate L-aspartate: Ser-475 and Arg-479. 540 to 543 serves as a coordination point for ATP; it reads GLER.

This sequence belongs to the class-II aminoacyl-tRNA synthetase family. Type 2 subfamily.

It localises to the cytoplasm. The enzyme catalyses tRNA(Asp) + L-aspartate + ATP = L-aspartyl-tRNA(Asp) + AMP + diphosphate. In Dictyostelium discoideum (Social amoeba), this protein is Aspartate--tRNA ligase, cytoplasmic 2 (aspS2).